A 603-amino-acid chain; its full sequence is Flavin-dependent halogenase chlA (603 aa).

Residues G16, A19, and E59 each coordinate FAD. Chloride-binding residues include T352 and G353.

This sequence belongs to the flavin-dependent halogenase family.

The catalysed reaction is 2,4,6-trihydroxyphenylhexan-1-one + FADH2 + chloride + O2 = (3-chloro-2,4,6-trihydroxyphenyl)hexan-1-one + FAD + 2 H2O + H(+). The enzyme catalyses (3-chloro-2,4,6-trihydroxyphenyl)hexan-1-one + FADH2 + chloride + O2 = (3,5-dichloro-2,4,6-trihydroxyphenyl)hexan-1-one + FAD + 2 H2O. Its function is as follows. Flavin-dependent halogenase; part of the gene cluster that mediates the biosynthesis of DIF-1 (Differentiation Inducing Factor-1), a signal molecule involved in the differentiation of pstO (prestalk-O) cells. The three-step process begins with the formation of (2,4,6-trihydroxyphenyl)-1-hexan-1-one (THPH) by the polyketide synthase StlB. THPH is then dichlorinated by the flavin-dependent halogenase ChlA. The last step of DIF-1 biosynthesis is the O-methylation of dichloro-THPH (or des-methyl-DIF-1) by the methyltransferase DmtA to yield DIF-1. The chain is Flavin-dependent halogenase chlA from Dictyostelium discoideum (Social amoeba).